Reading from the N-terminus, the 472-residue chain is Cell division protein FtsP (472 aa).

A signal peptide (tat-type signal) is located at residues Met-1–Ala-27.

This sequence belongs to the FtsP family. In terms of processing, predicted to be exported by the Tat system. The position of the signal peptide cleavage has not been experimentally proven.

It is found in the periplasm. Cell division protein that is required for growth during stress conditions. May be involved in protecting or stabilizing the divisomal assembly under conditions of stress. This Dickeya dadantii (strain 3937) (Erwinia chrysanthemi (strain 3937)) protein is Cell division protein FtsP.